Reading from the N-terminus, the 229-residue chain is MSASLAGLERKLGYTFKNQDQMLLALTHRSYAGRNNERLEFLGDAILNFVAGEALFERFPQAREGQLSRLRARLVKGETLARLARGFDLGDYLRLGSGELKSGGFRRESILADALEALIGAIYLDADMDTARERILAWLADEFEGLTLVDTNKDPKTRLQEFLQSRSCELPRYEVVDIQGEPHCRTFFVECEVVLLNNKSRGQGVSRRIAEQVAAASALIALGVENGND.

Residues 5-127 (LAGLERKLGY…LIGAIYLDAD (123 aa)) form the RNase III domain. Residue glutamate 40 coordinates Mg(2+). The active site involves aspartate 44. The Mg(2+) site is built by aspartate 113 and glutamate 116. Glutamate 116 is a catalytic residue. The 71-residue stretch at 154-224 (DPKTRLQEFL…AASALIALGV (71 aa)) folds into the DRBM domain.

This sequence belongs to the ribonuclease III family. In terms of assembly, homodimer. Requires Mg(2+) as cofactor.

The protein resides in the cytoplasm. It catalyses the reaction Endonucleolytic cleavage to 5'-phosphomonoester.. Digests double-stranded RNA. Involved in the processing of primary rRNA transcript to yield the immediate precursors to the large and small rRNAs (23S and 16S). Processes some mRNAs, and tRNAs when they are encoded in the rRNA operon. Processes pre-crRNA and tracrRNA of type II CRISPR loci if present in the organism. In Pseudomonas putida (strain ATCC 700007 / DSM 6899 / JCM 31910 / BCRC 17059 / LMG 24140 / F1), this protein is Ribonuclease 3.